The following is a 35-amino-acid chain: Augerpeptide hheTx4 (35 aa).

Contains 4 disulfide bonds. As to expression, expressed by the venom duct.

The protein localises to the secreted. The protein is Augerpeptide hheTx4 of Hastula hectica (Sea snail).